We begin with the raw amino-acid sequence, 546 residues long: Chaperonin GroEL 1 (546 aa).

ATP-binding positions include 30-33, K51, 87-91, G415, 479-481, and D495; these read TLGP, DGTTT, and NAA.

This sequence belongs to the chaperonin (HSP60) family. In terms of assembly, forms a cylinder of 14 subunits composed of two heptameric rings stacked back-to-back. Interacts with the co-chaperonin GroES.

It is found in the cytoplasm. It carries out the reaction ATP + H2O + a folded polypeptide = ADP + phosphate + an unfolded polypeptide.. Functionally, together with its co-chaperonin GroES, plays an essential role in assisting protein folding. The GroEL-GroES system forms a nano-cage that allows encapsulation of the non-native substrate proteins and provides a physical environment optimized to promote and accelerate protein folding. In Vibrio vulnificus (strain CMCP6), this protein is Chaperonin GroEL 1.